A 780-amino-acid chain; its full sequence is Mediator of RNA polymerase II transcription subunit 15 (780 aa).

The interaction with nhr-49 stretch occupies residues methionine 1–asparagine 124. The interaction with sbp-1 stretch occupies residues serine 2–leucine 96. 3 disordered regions span residues threonine 91–alanine 152, proline 166–methionine 363, and glycine 564–asparagine 597. Residues proline 125 to serine 139 show a composition bias toward low complexity. The span at proline 225 to methionine 245 shows a compositional bias: gly residues. Residues glutamine 296–glutamine 316 show a composition bias toward polar residues. 2 stretches are compositionally biased toward low complexity: residues alanine 333 to arginine 353 and serine 574 to glycine 594.

The protein belongs to the Mediator complex subunit 15 family. In terms of assembly, component of the Mediator complex. Interacts with nhr-49, nhr-64 and sbp-1. In terms of tissue distribution, expressed in the intestine and head neurons.

It localises to the nucleus. Component of the Mediator complex, a coactivator involved in regulated gene transcription of nearly all RNA polymerase II-dependent genes. Mediator functions as a bridge to convey information from gene-specific regulatory proteins to the basal RNA polymerase II transcription machinery. Mediator is recruited to promoters by direct interactions with regulatory proteins and serves as a scaffold for the assembly of a functional preinitiation complex with RNA polymerase II and the general transcription factors. Required for regulated expression of genes controlling fatty acid desaturation by transcription factors including sbp-1 and nhr-49. Involved in the response to simulated microgravity, in concert with sbp-1, probably acting in the intestine. This Caenorhabditis elegans protein is Mediator of RNA polymerase II transcription subunit 15 (mdt-15).